The primary structure comprises 389 residues: Liposome tubulation protein MamY (389 aa).

Residues 1-31 (MAIAAIMGDVLMLMGFNKAAFGKLNSASRAA) are Cytoplasmic-facing. The helical transmembrane segment at 32–52 (LIGAVIWAVLSIVYLTIFNGW) threads the bilayer. Residues 53-62 (KNLFTMLPHE) lie on the Lumenal side of the membrane. A helical membrane pass occupies residues 63 to 83 (FFIVLLSIALPIGLTVLILML). At 84–389 (SRIVKSVDTL…TETAPDSGMD (306 aa)) the chain is on the cytoplasmic side.

Belongs to the magnetosome MamY family.

It is found in the magnetosome membrane. Its function is as follows. Causes tubulation when added to magnetosome-derived liposomes, binds liposomes; may be involved in constriction of the cell inner membrane to form mature magnetosomes. Binds preferentially to cardiolipin, a component of bacterial membranes, with very poor to no binding of other tested (phospho)lipids. Addition of cardiolipin to magnetosome-derived lipids increases tubulation. May function with MamX, MamZ amd Mms6. The polypeptide is Liposome tubulation protein MamY (Paramagnetospirillum magneticum (strain ATCC 700264 / AMB-1) (Magnetospirillum magneticum)).